The following is a 510-amino-acid chain: NAD(P)H-quinone oxidoreductase subunit 2 A, chloroplastic (510 aa).

A run of 13 helical transmembrane segments spans residues 24 to 44, 57 to 77, 99 to 119, 124 to 144, 149 to 169, 183 to 203, 227 to 247, 295 to 315, 323 to 343, 354 to 374, 395 to 415, 418 to 438, and 484 to 504; these read LLLF…GLIL, IPWL…ALLF, IFQF…VEYI, MAIT…MFLC, LITI…LSGY, YLLM…WLYG, PGIS…LSLA, WHLL…LIAI, MLAY…IVGD, YMLF…SFGL, ALSL…AGFF, LHLF…IGLL, and MIVC…IIAI.

This sequence belongs to the complex I subunit 2 family. NDH is composed of at least 16 different subunits, 5 of which are encoded in the nucleus.

It is found in the plastid. It localises to the chloroplast thylakoid membrane. The enzyme catalyses a plastoquinone + NADH + (n+1) H(+)(in) = a plastoquinol + NAD(+) + n H(+)(out). It catalyses the reaction a plastoquinone + NADPH + (n+1) H(+)(in) = a plastoquinol + NADP(+) + n H(+)(out). In terms of biological role, NDH shuttles electrons from NAD(P)H:plastoquinone, via FMN and iron-sulfur (Fe-S) centers, to quinones in the photosynthetic chain and possibly in a chloroplast respiratory chain. The immediate electron acceptor for the enzyme in this species is believed to be plastoquinone. Couples the redox reaction to proton translocation, and thus conserves the redox energy in a proton gradient. The protein is NAD(P)H-quinone oxidoreductase subunit 2 A, chloroplastic of Ranunculus macranthus (Large buttercup).